The following is a 336-amino-acid chain: NADH-quinone oxidoreductase subunit H (336 aa).

A run of 8 helical transmembrane segments spans residues 4-24 (YILWTALYVLLIVIPLILVVA), 75-95 (YLFFIAPILAFAPAYAAWAVI), 108-128 (LGLLYILAMTSFSVYGIVIAG), 154-174 (MGFAIVGVVIAAGSMGITGII), 181-201 (LWHWYFIPLFPLFVVYFIAGI), 233-253 (LFFLAEYANMILISILTSIMF), 272-292 (FVPGVVWLFAKTGIFMFMFLW), and 308-328 (LGWKIFIPLTFVWVVVVACMV).

Belongs to the complex I subunit 1 family. NDH-1 is composed of 14 different subunits. Subunits NuoA, H, J, K, L, M, N constitute the membrane sector of the complex.

The protein localises to the cell inner membrane. It carries out the reaction a quinone + NADH + 5 H(+)(in) = a quinol + NAD(+) + 4 H(+)(out). Its function is as follows. NDH-1 shuttles electrons from NADH, via FMN and iron-sulfur (Fe-S) centers, to quinones in the respiratory chain. The immediate electron acceptor for the enzyme in this species is believed to be ubiquinone. Couples the redox reaction to proton translocation (for every two electrons transferred, four hydrogen ions are translocated across the cytoplasmic membrane), and thus conserves the redox energy in a proton gradient. This subunit may bind ubiquinone. In Francisella philomiragia subsp. philomiragia (strain ATCC 25017 / CCUG 19701 / FSC 153 / O#319-036), this protein is NADH-quinone oxidoreductase subunit H.